Reading from the N-terminus, the 89-residue chain is Small ribosomal subunit protein uS15 (89 aa).

The protein belongs to the universal ribosomal protein uS15 family. In terms of assembly, part of the 30S ribosomal subunit. Forms a bridge to the 50S subunit in the 70S ribosome, contacting the 23S rRNA.

In terms of biological role, one of the primary rRNA binding proteins, it binds directly to 16S rRNA where it helps nucleate assembly of the platform of the 30S subunit by binding and bridging several RNA helices of the 16S rRNA. Forms an intersubunit bridge (bridge B4) with the 23S rRNA of the 50S subunit in the ribosome. This is Small ribosomal subunit protein uS15 from Azobacteroides pseudotrichonymphae genomovar. CFP2.